A 31-amino-acid polypeptide reads, in one-letter code: Dermaseptin-7.2TR (31 aa).

Glu31 carries the post-translational modification Glutamic acid 1-amide.

As to expression, expressed by the skin glands.

The protein localises to the secreted. In terms of biological role, has antimicrobial activity. The chain is Dermaseptin-7.2TR from Phyllomedusa trinitatis (Trinidad leaf frog).